We begin with the raw amino-acid sequence, 191 residues long: Peptidyl-tRNA hydrolase (191 aa).

Residue Y17 coordinates tRNA. H22 acts as the Proton acceptor in catalysis. TRNA-binding residues include Y68, N70, and N116.

It belongs to the PTH family. As to quaternary structure, monomer.

It localises to the cytoplasm. It carries out the reaction an N-acyl-L-alpha-aminoacyl-tRNA + H2O = an N-acyl-L-amino acid + a tRNA + H(+). Hydrolyzes ribosome-free peptidyl-tRNAs (with 1 or more amino acids incorporated), which drop off the ribosome during protein synthesis, or as a result of ribosome stalling. Functionally, catalyzes the release of premature peptidyl moieties from peptidyl-tRNA molecules trapped in stalled 50S ribosomal subunits, and thus maintains levels of free tRNAs and 50S ribosomes. The chain is Peptidyl-tRNA hydrolase from Francisella tularensis subsp. mediasiatica (strain FSC147).